A 232-amino-acid chain; its full sequence is Cell cycle response regulator CtrA (232 aa).

Positions 2-116 (RVLLIEDDSA…ELIARIHAIV (115 aa)) constitute a Response regulatory domain. Asp-51 is modified (4-aspartylphosphate). The ompR/PhoB-type DNA-binding region spans 124–223 (QSVITTGDLV…VWGRGYVLRE (100 aa)).

The protein localises to the cytoplasm. In terms of biological role, essential protein that plays a role in the control of cell division, possibly through the transcriptional regulation of ccrM, rpoD, pleC, minC and ftsZ genes. The sequence is that of Cell cycle response regulator CtrA (ctrA) from Brucella anthropi (strain ATCC 49188 / DSM 6882 / CCUG 24695 / JCM 21032 / LMG 3331 / NBRC 15819 / NCTC 12168 / Alc 37) (Ochrobactrum anthropi).